The primary structure comprises 628 residues: MGLSRTMTAIQLNSSIPLGLPVPPHTPHAISVSLPTWSETVAYKEGIKHINDALLNGYPRMFIQLNVRKLSSLLEQKFGINGERCMLFPTYKVAEQCQLFMQARSVGARIVGLLICPEGKQNNRVIECKEPANLSESTSSASTNLYVVLFPPDMFSIANQFWQHSGQGISSRLTDHCLSILTENAAHANGSSLSPLTFPGNSHVAPEQLEVGHDVDLEGRCGGPLLADAAIAKQVLRQRIAGLLIRYGSCDYRAELCVGKKNLEGNQNSRDFADVTENDVYLFPTGMTAIWNAHQLALAVRPTAKSVCFGFPYSDTLKVLQKWGPGCHFFAGGTDSEIDELEIILEQEFARDSTKPPVLALFTEFPSNPLLCSPNLLRLRALADKYDFLLAIDETIGNFVNVEVLPYADILLTSLSKIFSGNANVMGGSLVLNPNGRHYTALKAHIAAHYQDIYYPEDAIHMEWNSRDFEQRIKIIDDNAEAICDFLRPHSVAAGATNAVIKEVFYPKYITPENYERCLTKGTNHDLSSSPSNGGGGYGGLFSLTFTSGAASAAFYDALSCFKGPSLGTNFTLACTYTLLAHFKELEWAAQYGVEAGLVRISVGTENTEALLRTIEAALGAAKEAKGL.

Y313 is a binding site for substrate. K417 carries the post-translational modification N6-(pyridoxal phosphate)lysine.

This sequence belongs to the trans-sulfuration enzymes family. It depends on pyridoxal 5'-phosphate as a cofactor.

Its pathway is secondary metabolite biosynthesis. Its function is as follows. Cystathionine gamma-synthase-like enzyme; part of the gene cluster that mediates the biosynthesis of the psychoactive metabolites ibotenic acid and muscimol. The first committed step is glutamate hydroxylation by the 2-oxoglutarate-dependent dioxygenase iboH, and the last step is decarboxylation of ibotenic acid to muscimol by the decarboxylase iboD. The order of the intermediate reactions is somewhat ambiguous. IboA likely activates the carboxylic acid at position 5 to introduce an amide bond, and the flavin monooxygenase iboF generates the N-O bond. There are several options for the latter step. One option is that iboF directly hydroxylates the amide nitrogen formed by iboA to produce a hydroxamic acid species. Another option is that iboF hydroxylates an external N-containing compound, whose resulting N-O bond is subsequently introduced into the hydroxyglutamate scaffold. The paralogous PLP-dependent cystathionine gamma-synthase-like enzymes iboG1 and iboG2 are likely involved in substitution of the OH group at position 3 by the O-N moiety. The first cyclic intermediate is most probably tricholomic acid which is likely desaturated to ibotenic acid by the cytochrome P450 monooxygenase iboC. In Amanita muscaria (strain Koide BX008), this protein is Cystathionine gamma-synthase-like enzyme iboG2.